A 217-amino-acid polypeptide reads, in one-letter code: Phosphoenolpyruvate guanylyltransferase (217 aa).

The phosphoenolpyruvate site is built by Thr-150, Gly-165, and Ser-168.

The protein belongs to the CofC family.

It catalyses the reaction phosphoenolpyruvate + GTP + H(+) = enolpyruvoyl-2-diphospho-5'-guanosine + diphosphate. Its pathway is cofactor biosynthesis; coenzyme F420 biosynthesis. Functionally, guanylyltransferase that catalyzes the activation of phosphoenolpyruvate (PEP) as enolpyruvoyl-2-diphospho-5'-guanosine, via the condensation of PEP with GTP. It is involved in the biosynthesis of coenzyme F420, a hydride carrier cofactor. In Mycobacterium marinum (strain ATCC BAA-535 / M), this protein is Phosphoenolpyruvate guanylyltransferase.